Reading from the N-terminus, the 1192-residue chain is ATP-dependent helicase/deoxyribonuclease subunit B (1192 aa).

This sequence belongs to the helicase family. AddB/RexB type 2 subfamily. As to quaternary structure, heterodimer of AddA and RexB. The cofactor is Mg(2+).

In terms of biological role, the heterodimer acts as both an ATP-dependent DNA helicase and an ATP-dependent, dual-direction single-stranded exonuclease. Recognizes the chi site generating a DNA molecule suitable for the initiation of homologous recombination. This subunit has 5' -&gt; 3' nuclease activity but not helicase activity. This Pediococcus pentosaceus (strain ATCC 25745 / CCUG 21536 / LMG 10740 / 183-1w) protein is ATP-dependent helicase/deoxyribonuclease subunit B.